The sequence spans 617 residues: Elongation factor 4 (617 aa).

Residues 17 to 198 form the tr-type G domain; that stretch reads AIIRNFCIIA…KIVRDLPAPV (182 aa). GTP contacts are provided by residues 29–34 and 145–148; these read DHGKST and NKID.

This sequence belongs to the TRAFAC class translation factor GTPase superfamily. Classic translation factor GTPase family. LepA subfamily.

It localises to the cell membrane. The enzyme catalyses GTP + H2O = GDP + phosphate + H(+). In terms of biological role, required for accurate and efficient protein synthesis under certain stress conditions. May act as a fidelity factor of the translation reaction, by catalyzing a one-codon backward translocation of tRNAs on improperly translocated ribosomes. Back-translocation proceeds from a post-translocation (POST) complex to a pre-translocation (PRE) complex, thus giving elongation factor G a second chance to translocate the tRNAs correctly. Binds to ribosomes in a GTP-dependent manner. This is Elongation factor 4 from Arthrobacter sp. (strain FB24).